A 635-amino-acid chain; its full sequence is Extracellular metalloproteinase MEP (635 aa).

The N-terminal stretch at 1 to 19 (MRYSLSLALLGVAAVTVVA) is a signal peptide. Residues 20-242 (HPHTPGRHGV…VHGVVDYVSH (223 aa)) constitute a propeptide that is removed on maturation. His428 contributes to the Zn(2+) binding site. The active site involves Glu429. Zn(2+) is bound at residue His432. Asn473 is a glycosylation site (N-linked (GlcNAc...) asparagine).

It belongs to the peptidase M36 family. Requires Zn(2+) as cofactor.

It is found in the secreted. Functionally, secreted metalloproteinase that allows assimilation of proteinaceous substrates. The protein is Extracellular metalloproteinase MEP (MEP) of Pyricularia oryzae (strain 70-15 / ATCC MYA-4617 / FGSC 8958) (Rice blast fungus).